A 394-amino-acid chain; its full sequence is ORC1-type DNA replication protein 3 (394 aa).

ATP is bound by residues 66–70 (TGKTF) and Y207.

This sequence belongs to the CDC6/cdc18 family. As to quaternary structure, monomer. Interacts with Cdc6-1, Cdc6-2, MCM and PolB1.

Functionally, involved in regulation of DNA replication. May play essential roles in origin recognition and cell cycle control of replication. Binds to DNA, with a preference for molecules that contain a bubble, a fork, or a tail. Inhibits the binding of the MCM helicase to the origin DNA and inhibits its DNA helicase activity. Also regulates the DNA polymerase and the nuclease activities of PolB1. Inhibits the DNA-binding activity of Cdc6-1 and Cdc6-2. This chain is ORC1-type DNA replication protein 3 (cdc6-3), found in Saccharolobus solfataricus (strain ATCC 35092 / DSM 1617 / JCM 11322 / P2) (Sulfolobus solfataricus).